A 126-amino-acid chain; its full sequence is uncharacterized protein (126 aa).

The chain crosses the membrane as a helical span at residues 48–68 (ILCMFPWQCVVYVFSNFVWLV).

Its subcellular location is the membrane. This is an uncharacterized protein from Homo sapiens (Human).